Here is a 1297-residue protein sequence, read N- to C-terminus: MAVPSLWPWGACLPVIFLSLGFGLDTVEVCPSLDIRSEVAELRQLENCSVVEGHLQILLMFTATGEDFRGLSFPRLTQVTDYLLLFRVYGLESLRDLFPNLAVIRGTRLFLGYALVIFEMPHLRDVALPALGAVLRGAVRVEKNQELCHLSTIDWGLLQPAPGANHIVGNKLGEECADVCPGVLGAAGEPCAKTTFSGHTDYRCWTSSHCQRVCPCPHGMACTARGECCHTECLGGCSQPEDPRACVACRHLYFQGACLWACPPGTYQYESWRCVTAERCASLHSVPGRASTFGIHQGSCLAQCPSGFTRNSSSIFCHKCEGLCPKECKVGTKTIDSIQAAQDLVGCTHVEGSLILNLRQGYNLEPQLQHSLGLVETITGFLKIKHSFALVSLGFFKNLKLIRGDAMVDGNYTLYVLDNQNLQQLGSWVAAGLTIPVGKIYFAFNPRLCLEHIYRLEEVTGTRGRQNKAEINPRTNGDRAACQTRTLRFVSNVTEADRILLRWERYEPLEARDLLSFIVYYKESPFQNATEHVGPDACGTQSWNLLDVELPLSRTQEPGVTLASLKPWTQYAVFVRAITLTTEEDSPHQGAQSPIVYLRTLPAAPTVPQDVISTSNSSSHLLVRWKPPTQRNGNLTYYLVLWQRLAEDGDLYLNDYCHRGLRLPTSNNDPRFDGEDGDPEAEMESDCCPCQHPPPGQVLPPLEAQEASFQKKFENFLHNAITIPISPWKVTSINKSPQRDSGRHRRAAGPLRLGGNSSDFEIQEDKVPRERAVLSGLRHFTEYRIDIHACNHAAHTVGCSAATFVFARTMPHREADGIPGKVAWEASSKNSVLLRWLEPPDPNGLILKYEIKYRRLGEEATVLCVSRLRYAKFGGVHLALLPPGNYSARVRATSLAGNGSWTDSVAFYILGPEEEDAGGLHVLLTATPVGLTLLIVLAALGFFYGKKRNRTLYASVNPEYFSASDMYVPDEWEVPREQISIIRELGQGSFGMVYEGLARGLEAGEESTPVALKTVNELASPRECIEFLKEASVMKAFKCHHVVRLLGVVSQGQPTLVIMELMTRGDLKSHLRSLRPEAENNPGLPQPALGEMIQMAGEIADGMAYLAANKFVHRDLAARNCMVSQDFTVKIGDFGMTRDVYETDYYRKGGKGLLPVRWMAPESLKDGIFTTHSDVWSFGVVLWEIVTLAEQPYQGLSNEQVLKFVMDGGVLEELEGCPLQLQELMSRCWQPNPRLRPSFTHILDSIQEELRPSFRLLSFYYSPECRGARGSLPTTDAEPDSSPTPRDCSPQNGGPGH.

An N-terminal signal peptide occupies residues 1 to 26; it reads MAVPSLWPWGACLPVIFLSLGFGLDT. An N-linked (GlcNAc...) asparagine glycan is attached at Asn-47. Disulfide bonds link Cys-214–Cys-222, Cys-216–Cys-228, Cys-229–Cys-237, Cys-233–Cys-246, Cys-249–Cys-258, Cys-262–Cys-274, Cys-280–Cys-300, Cys-304–Cys-317, and Cys-320–Cys-324. N-linked (GlcNAc...) asparagine glycosylation is present at Asn-311. Asn-411, Asn-492, Asn-528, Asn-616, and Asn-634 each carry an N-linked (GlcNAc...) asparagine glycan. Fibronectin type-III domains follow at residues 483–603 and 607–707; these read QTRT…TLPA and VPQD…AQEA. A disulfide bridge connects residues Cys-657 and Cys-864. 2 disordered regions span residues 666–687 and 732–758; these read SNND…ESDC and SINK…GNSS. Over residues 675–685 the composition is skewed to acidic residues; it reads EDGDPEAEMES. The Extracellular portion of the chain corresponds to 747 to 921; it reads AAGPLRLGGN…PEEEDAGGLH (175 aa). Residues Asn-756, Asn-885, and Asn-898 are each glycosylated (N-linked (GlcNAc...) asparagine). Residues 818–913 form the Fibronectin type-III 3 domain; it reads IPGKVAWEAS…SVAFYILGPE (96 aa). The chain crosses the membrane as a helical span at residues 922-943; sequence VLLTATPVGLTLLIVLAALGFF. Over 944-1297 the chain is Cytoplasmic; sequence YGKKRNRTLY…CSPQNGGPGH (354 aa). The region spanning 979–1254 is the Protein kinase domain; that stretch reads ISIIRELGQG…SIQEELRPSF (276 aa). ATP is bound by residues 985 to 993 and Lys-1013; that span reads LGQGSFGMV. Residue Asp-1115 is the Proton acceptor of the active site. Tyr-1145 and Tyr-1146 each carry phosphotyrosine; by autocatalysis. The tract at residues 1267 to 1297 is disordered; it reads GARGSLPTTDAEPDSSPTPRDCSPQNGGPGH. Polar residues predominate over residues 1281–1297; it reads SSPTPRDCSPQNGGPGH.

Belongs to the protein kinase superfamily. Tyr protein kinase family. Insulin receptor subfamily. In terms of assembly, probable tetramer of 2 alpha and 2 beta chains linked by disulfide bonds. The alpha chains contribute to the formation of the ligand-binding domain, while the beta chains carry the kinase domain. In terms of processing, autophosphorylated on tyrosine residues between pH 7.9 and pH 10.5.

It is found in the membrane. The catalysed reaction is L-tyrosyl-[protein] + ATP = O-phospho-L-tyrosyl-[protein] + ADP + H(+). Receptor with tyrosine-protein kinase activity. Functions as a pH sensing receptor which is activated by increased extracellular pH. Activates an intracellular signaling pathway that involves IRS1 and AKT1/PKB. This is Insulin receptor-related protein (INSRR) from Homo sapiens (Human).